We begin with the raw amino-acid sequence, 1820 residues long: MSAGGRDEERRKLADIIHHWNANRLDLFEISQPTEDLEFHGVMRFYFQDKAAGNFATKCIRVSSTATTQDVIETLAEKFRPDMRMLSSPKYSLYEVHVSGERRLDIDEKPLVVQLNWNKDDREGRFVLKNENDAIPAKKAQSNGPEKQEKEGVIQNFKRTLSKKEKKEKKKKEKEALRQASDKEERPSQGDDSENSRLAAEVYKDMPETSFTRTISNPEVVMKRRRQQKLEKRMQEFRSSDGRPDSGGTLRIYADSLKPNIPYKTILLSTTDTADFAVAESLEKYGLEKENPKDYCIARVMLPPGAQHSDERGAKEIILDDDECPLQIFREWPSDKGILVFQLKRRPPDYIPKKMKKHVEGKSLKGKDRADGSGYGSALPPEKLPYLVELSPGRRNHFAYYSYHTYEDGSDSRDKPKLYRLQLSVTEVGTEKFDDNSIQLFGPGIQPHHCDLTNMDGVVTVTPRSMDAETYVDGQRISETTMLQSGMRLQFGTSHVFKFVDPIQDHVLSKRSVDGGLMVKGPRHKPGAVQETTFELGGDVHSGTALPASRSTTRLDSDRVSSASSTAERGMVKPMIRLDQEQEYRRRENRTQDATGPELILPASIEFRESSEDSFLSAIINYTNSSTVHFKLSPTYVLYMACRYVLSSQHRPDISPTERTHKAIAVVNKMVSMMEGVIQKQKNIAGALAFWMANASELLNFIKQDRDLSRITLDAQDVLAHLVQMAFKYLVHCLQSELNNYMPAFLDDPEENSLQRPKIDDVLHTLTGAMSLLRRCRVNAALTIQLFSQLFHFINMWLFNRLVTDPDSGLCSHYWGAIIRQQLGHIEAWAEKQGLELAADCHLSRIVQATTLLTMDKYVPDDIPNINSTCFKLNSLQLQALLQNYHCAPDEPFIPTDLIENVVAVAENTADELARSDGRDVQLEEDPDLQLPFLLPEDGYSCDVVRNIPNGLQEFLDPLCQRGFCRLVPHTRSPGTWTIYFEGADYESHLMRENAELAQPLRKEPEIITVTLKKQNGMGLSIVAAKGAGQDKLGIYVKSVVKGGAADVDGRLAAGDQLLSVDGRSLVGLSQERAAELMTRTSSVVTLEVAKQGAIYHGLATLLNQPSPMMQRISDRRGSGKPRPKSEGFELYNNSAQNGSPESPQMPWTEYSEPKKLPGDDRLMKNRADHRSSPNVANQPPSPGGKGPYTSGTAAKITSVSTGNLCTEEQSPPPRPEAYPIPTQTYTREYFTFPASKSQDRMAPPQSQWPNYEEKPHVHTESNHSSIAIQRVTRSQEELREEKVYQLERHRVEAGMDRKCDSDMWINQSSSVESSTSSQEHLNHSSKSVTPASTLTKSGPGRWKTPAAVLPTPVAVSQPIRTDLPPPPPPPPVHYTSEFDGIPMDLPLPPPPANQAGPQSAQVAAAEWKKREEHQRWYEKEKARLEEERERKRREQERKLGQMRSQTLNPASFSPLATQAKPEKPSTLQRPQETVIRELQPQQQPRTIERKDLQYITISKEELSSGDSLSPDPWKRDAREKLEKQQQMHIVDMLSKEIHELQNKVDRTAEESDRLRKLMLEWQFQKRLQESKQKDEDDDEEEDDDVDTMLIMQRLEAERRARMQDEERRRQQQLEEMRKREAEDRVRQEEDGRHQEEERVKRDAEEKRRQEEGYYSRLEAERRRQHEEAARRLLEPEEPGLSRPPLPRDYEPPSLSSAPCAPPPPPQRNASYLKTQVLSPDSLFTAKFVAYDEEEEDYGPAGPNSYSGSAGTAVGAYDAPREAREKLTRSQDADLPGSSGAPENLTFKERQRLFSQGQDVSDKVKASRKLTELENELNTK.

Positions 39-133 (FHGVMRFYFQ…GRFVLKNEND (95 aa)) constitute a Ras-associating 1 domain. The disordered stretch occupies residues 129–196 (KNENDAIPAK…PSQGDDSENS (68 aa)). Residues 146–186 (EKQEKEGVIQNFKRTLSKKEKKEKKKKEKEALRQASDKEER) adopt a coiled-coil conformation. Positions 160–172 (TLSKKEKKEKKKK) are enriched in basic residues. Residues 173-189 (EKEALRQASDKEERPSQ) show a composition bias toward basic and acidic residues. Phosphoserine is present on residues serine 216, serine 246, and serine 256. The region spanning 246-348 (SGGTLRIYAD…LVFQLKRRPP (103 aa)) is the Ras-associating 2 domain. Over residues 356-371 (KKHVEGKSLKGKDRAD) the composition is skewed to basic and acidic residues. The tract at residues 356–377 (KKHVEGKSLKGKDRADGSGYGS) is disordered. Serine 391 and serine 424 each carry phosphoserine. The region spanning 426–492 (TEVGTEKFDD…LQSGMRLQFG (67 aa)) is the FHA domain. 13 positions are modified to phosphoserine: serine 512, serine 557, serine 562, serine 655, serine 1083, serine 1107, serine 1126, serine 1140, serine 1143, serine 1172, serine 1173, serine 1182, and serine 1199. The disordered stretch occupies residues 538 to 569 (GDVHSGTALPASRSTTRLDSDRVSSASSTAER). The region spanning 653–908 (DISPTERTHK…IENVVAVAEN (256 aa)) is the Dilute domain. Residues 1007-1093 (IITVTLKKQN…VVTLEVAKQG (87 aa)) form the PDZ domain. Positions 1107–1194 (SPMMQRISDR…GKGPYTSGTA (88 aa)) are disordered. Residues 1113–1128 (ISDRRGSGKPRPKSEG) are compositionally biased toward basic and acidic residues. Over residues 1132–1143 (YNNSAQNGSPES) the composition is skewed to polar residues. Positions 1152–1172 (SEPKKLPGDDRLMKNRADHRS) are enriched in basic and acidic residues. The segment at 1203 to 1222 (GNLCTEEQSPPPRPEAYPIP) is disordered. Threonine 1232 carries the phosphothreonine modification. Disordered stretches follow at residues 1235-1278 (ASKS…SQEE), 1308-1527 (QSSS…KQQQ), and 1567-1716 (RLQE…LKTQ). Serine 1238 is modified (phosphoserine). The segment covering 1252–1262 (YEEKPHVHTES) has biased composition (basic and acidic residues). Serine 1275 bears the Phosphoserine mark. Positions 1309–1318 (SSSVESSTSS) are enriched in low complexity. Positions 1325 to 1337 (SSKSVTPASTLTK) are enriched in polar residues. Serine 1328 carries the phosphoserine modification. At threonine 1330 the chain carries Phosphothreonine. A compositionally biased stretch (pro residues) spans 1364–1373 (LPPPPPPPPV). Positions 1407–1440 (EWKKREEHQRWYEKEKARLEEERERKRREQERKL) are enriched in basic and acidic residues. Residues 1410-1446 (KREEHQRWYEKEKARLEEERERKRREQERKLGQMRSQ) adopt a coiled-coil conformation. Residues 1443-1457 (MRSQTLNPASFSPLA) are compositionally biased toward polar residues. A compositionally biased stretch (basic and acidic residues) spans 1487 to 1503 (TIERKDLQYITISKEEL). Residues serine 1499 and serine 1510 each carry the phosphoserine modification. Positions 1513–1526 (PWKRDAREKLEKQQ) are enriched in basic and acidic residues. Residues 1523–1561 (EKQQQMHIVDMLSKEIHELQNKVDRTAEESDRLRKLMLE) are a coiled coil. Residues 1576–1587 (EDDDEEEDDDVD) are compositionally biased toward acidic residues. A coiled-coil region spans residues 1593–1665 (QRLEAERRAR…SRLEAERRRQ (73 aa)). Over residues 1595-1675 (LEAERRARMQ…HEEAARRLLE (81 aa)) the composition is skewed to basic and acidic residues. Phosphoserine is present on residues serine 1694, serine 1719, serine 1770, and serine 1795. Residues 1734 to 1820 (EEEDYGPAGP…TELENELNTK (87 aa)) form a disordered region. Residues 1759–1772 (APREAREKLTRSQD) show a composition bias toward basic and acidic residues. The span at 1800 to 1820 (VSDKVKASRKLTELENELNTK) shows a compositional bias: basic and acidic residues. N6-acetyllysine is present on lysine 1803.

Homodimer. Interacts with F-actin, nectin and NECTIN3. Essential for the association of nectin and E-cadherin. Isoform 2/s-afadin does not interact with F-actin. Interacts with ZO-1 and occludin, but probably in an indirect manner. Interacts with RIT1, RIT2, NRXN1 and BCR. Interacts with ADAM10; the interaction locks ADAM10 at adherens junctions following ADAM10 recruitment to adherens junctions by TSPAN33. In terms of tissue distribution, isoform 1 is expressed only in a restricted set of epithelial structures during early embryogenesis.

The protein resides in the cell junction. Its subcellular location is the adherens junction. Its function is as follows. Belongs to an adhesion system, probably together with the E-cadherin-catenin system, which plays a role in the organization of homotypic, interneuronal and heterotypic cell-cell adherens junctions (AJs). Nectin- and actin-filament-binding protein that connects nectin to the actin cytoskeleton. May play a key role in the organization of epithelial structures of the embryonic ectoderm. Essential for the organization of adherens junctions. The chain is Afadin from Mus musculus (Mouse).